A 461-amino-acid polypeptide reads, in one-letter code: Kynureninase (461 aa).

Pyridoxal 5'-phosphate-binding positions include Leu-114, Thr-115, 142 to 145, Asp-228, His-231, and Tyr-253; that span reads FPSD. An N6-(pyridoxal phosphate)lysine modification is found at Lys-254. Residues Trp-288 and Asn-316 each coordinate pyridoxal 5'-phosphate.

The protein belongs to the kynureninase family. In terms of assembly, homodimer. Requires pyridoxal 5'-phosphate as cofactor.

It localises to the cytoplasm. It carries out the reaction L-kynurenine + H2O = anthranilate + L-alanine + H(+). The enzyme catalyses 3-hydroxy-L-kynurenine + H2O = 3-hydroxyanthranilate + L-alanine + H(+). The protein operates within amino-acid degradation; L-kynurenine degradation; L-alanine and anthranilate from L-kynurenine: step 1/1. Its pathway is cofactor biosynthesis; NAD(+) biosynthesis; quinolinate from L-kynurenine: step 2/3. Catalyzes the cleavage of L-kynurenine (L-Kyn) and L-3-hydroxykynurenine (L-3OHKyn) into anthranilic acid (AA) and 3-hydroxyanthranilic acid (3-OHAA), respectively. This Lodderomyces elongisporus (strain ATCC 11503 / CBS 2605 / JCM 1781 / NBRC 1676 / NRRL YB-4239) (Yeast) protein is Kynureninase.